Consider the following 64-residue polypeptide: Large ribosomal subunit protein bL35 (64 aa).

This sequence belongs to the bacterial ribosomal protein bL35 family.

The protein is Large ribosomal subunit protein bL35 of Vibrio metschnikovii.